A 100-amino-acid polypeptide reads, in one-letter code: Small ribosomal subunit protein uS14c (100 aa).

The protein belongs to the universal ribosomal protein uS14 family. As to quaternary structure, part of the 30S ribosomal subunit.

Its subcellular location is the plastid. It is found in the chloroplast. Its function is as follows. Binds 16S rRNA, required for the assembly of 30S particles. The sequence is that of Small ribosomal subunit protein uS14c from Chaetosphaeridium globosum (Charophycean green alga).